The following is a 718-amino-acid chain: Polyribonucleotide nucleotidyltransferase (718 aa).

Residues aspartate 497 and aspartate 503 each contribute to the Mg(2+) site. In terms of domain architecture, KH spans proline 564–isoleucine 623. One can recognise an S1 motif domain in the interval glycine 633–leucine 701.

The protein belongs to the polyribonucleotide nucleotidyltransferase family. Requires Mg(2+) as cofactor.

The protein localises to the cytoplasm. It catalyses the reaction RNA(n+1) + phosphate = RNA(n) + a ribonucleoside 5'-diphosphate. Involved in mRNA degradation. Catalyzes the phosphorolysis of single-stranded polyribonucleotides processively in the 3'- to 5'-direction. This chain is Polyribonucleotide nucleotidyltransferase, found in Rippkaea orientalis (strain PCC 8801 / RF-1) (Cyanothece sp. (strain PCC 8801)).